We begin with the raw amino-acid sequence, 700 residues long: Methionine--tRNA ligase (700 aa).

Positions 16–26 (PYANGAFHVGH) match the 'HIGH' region motif. 4 residues coordinate Zn(2+): cysteine 148, cysteine 151, cysteine 161, and cysteine 164. The 'KMSKS' region signature appears at 337–341 (KMSKS). An ATP-binding site is contributed by lysine 340. Residues 594-700 (DFAKIDLRIA…PGAEPGMRVG (107 aa)) enclose the tRNA-binding domain.

It belongs to the class-I aminoacyl-tRNA synthetase family. MetG type 1 subfamily. Homodimer. It depends on Zn(2+) as a cofactor.

The protein localises to the cytoplasm. It carries out the reaction tRNA(Met) + L-methionine + ATP = L-methionyl-tRNA(Met) + AMP + diphosphate. In terms of biological role, is required not only for elongation of protein synthesis but also for the initiation of all mRNA translation through initiator tRNA(fMet) aminoacylation. This chain is Methionine--tRNA ligase, found in Janthinobacterium sp. (strain Marseille) (Minibacterium massiliensis).